The primary structure comprises 883 residues: NF-X1-type zinc finger protein NFXL2 (883 aa).

Positions 1-10 (MTNMAGTATT) are enriched in polar residues. Residues 1–44 (MTNMAGTATTEFRWKSPPQPPSQEQPISDSDSDSGSDSENHQHR) are disordered. An RING-type; degenerate zinc finger spans residues 87–152 (CLICLERIKR…EAVWNCPKCR (66 aa)). 11 NF-X1-type zinc fingers span residues 198 to 216 (CGHC…SCPK), 250 to 269 (CNIH…PCRE), 303 to 322 (CGKH…LCPY), 357 to 377 (CGYH…TCRI), 410 to 429 (CARH…PCSE), 437 to 456 (CRNH…PCPI), 494 to 515 (CRHG…PCRL), 523 to 568 (CGHK…RCPE), 605 to 636 (CGNH…KCDL), 646 to 664 (CQHP…PCKT), and 709 to 738 (CTHL…RCKC). The tract at residues 798–824 (EIEEKEEPSGKNASKRRKRRGRGQDIQ) is disordered. Residues 841 to 863 (MVVMLVAMLAAVSYYGYKGLLWL) form a helical membrane-spanning segment.

This sequence belongs to the NFX1 family. In terms of assembly, interacts with ADO1/ZTL. Constitutively expressed in mesophyll and guard cells.

The protein resides in the nucleus. It localises to the membrane. The protein operates within protein modification; protein ubiquitination. Probable transcriptional regulator. May mediate E2- or E3-dependent ubiquitination. Required to gate light sensitivity during the night. Regulates the speed of the clock by acting in the feedback loop between CCA1, LHY and APRR1/TOC1. Promotes the expression of CCA1 at night but not by days. This activational effect is enhanced by interaction with ADO1/ZTL. Association with ADO1/ZTL is not leading to the degradation of NFXL2. Confers sensitivity to osmotic stress such as high salinity. Prevents H(2)O(2) production and abscisic acid accumulation. Part of a regulatory network that integrates the biosynthesis and action of abscisic acid, reactive oxygen species and cuticle components. In Arabidopsis thaliana (Mouse-ear cress), this protein is NF-X1-type zinc finger protein NFXL2 (NFXL2).